The chain runs to 262 residues: Acyl-[acyl-carrier-protein]--UDP-N-acetylglucosamine O-acyltransferase (262 aa).

Belongs to the transferase hexapeptide repeat family. LpxA subfamily. In terms of assembly, homotrimer.

The protein localises to the cytoplasm. The catalysed reaction is a (3R)-hydroxyacyl-[ACP] + UDP-N-acetyl-alpha-D-glucosamine = a UDP-3-O-[(3R)-3-hydroxyacyl]-N-acetyl-alpha-D-glucosamine + holo-[ACP]. The protein operates within glycolipid biosynthesis; lipid IV(A) biosynthesis; lipid IV(A) from (3R)-3-hydroxytetradecanoyl-[acyl-carrier-protein] and UDP-N-acetyl-alpha-D-glucosamine: step 1/6. Involved in the biosynthesis of lipid A, a phosphorylated glycolipid that anchors the lipopolysaccharide to the outer membrane of the cell. This is Acyl-[acyl-carrier-protein]--UDP-N-acetylglucosamine O-acyltransferase from Vibrio vulnificus (strain CMCP6).